A 212-amino-acid chain; its full sequence is Ribosomal RNA small subunit methyltransferase G (212 aa).

Residues Gly80, Leu85, 131-132 (AE), and Arg146 contribute to the S-adenosyl-L-methionine site.

Belongs to the methyltransferase superfamily. RNA methyltransferase RsmG family.

The protein resides in the cytoplasm. The enzyme catalyses guanosine(527) in 16S rRNA + S-adenosyl-L-methionine = N(7)-methylguanosine(527) in 16S rRNA + S-adenosyl-L-homocysteine. Specifically methylates the N7 position of guanine in position 527 of 16S rRNA. In Xylella fastidiosa (strain 9a5c), this protein is Ribosomal RNA small subunit methyltransferase G.